The chain runs to 104 residues: Small ubiquitin-related modifier 3 (104 aa).

Glycyl lysine isopeptide (Lys-Gly) (interchain with G-Cter in SUMO2) cross-links involve residues Lys5 and Lys7. Residue Lys11 forms a Glycyl lysine isopeptide (Lys-Gly) (interchain with G-Cter in SUMO); alternate linkage. A Glycyl lysine isopeptide (Lys-Gly) (interchain with G-Cter in SUMO2); alternate cross-link involves residue Lys11. Residues 15 to 92 form the Ubiquitin-like domain; that stretch reads DHINLKVAGQ…IDVFQQQTGG (78 aa). A Glycyl lysine isopeptide (Gly-Lys) (interchain with K-? in acceptor proteins) cross-link involves residue Gly92. The propeptide occupies 93–104; the sequence is SRVASCLLGSGL.

The protein belongs to the ubiquitin family. SUMO subfamily. As to quaternary structure, interacts with SAE2 and UBE2I. Covalently attached to a number of proteins. Interacts with USP25 (via ts SIM domain); the interaction sumoylates USP25 and inhibits its ubiquitin hydrolyzing activity. Interacts with BMAL1. Polymeric chains can be formed through Lys-11 cross-linking. Post-translationally, cleavage of precursor form by SENP1, SENP2 or SENP5 is necessary for function.

It is found in the cytoplasm. The protein localises to the nucleus. Its subcellular location is the PML body. Functionally, ubiquitin-like protein which can be covalently attached to target lysines either as a monomer or as a lysine-linked polymer. Does not seem to be involved in protein degradation and may function as an antagonist of ubiquitin in the degradation process. Plays a role in a number of cellular processes such as nuclear transport, DNA replication and repair, mitosis and signal transduction. Covalent attachment to its substrates requires prior activation by the E1 complex SAE1-SAE2 and linkage to the E2 enzyme UBE2I, and can be promoted by an E3 ligase such as PIAS1-4, RANBP2 or CBX4. Plays a role in the regulation of sumoylation status of SETX. The chain is Small ubiquitin-related modifier 3 (SUMO3) from Bos taurus (Bovine).